The chain runs to 351 residues: Glycerol-1-phosphate dehydrogenase [NAD(P)+] (351 aa).

Residues Gly97–Asp101 and Thr119–Ser122 contribute to the NAD(+) site. Residue Asp124 participates in substrate binding. Ser128 contributes to the NAD(+) binding site. Asp171 contacts substrate. Positions 171 and 251 each coordinate Zn(2+). His255 contacts substrate. A Zn(2+)-binding site is contributed by His267.

The protein belongs to the glycerol-1-phosphate dehydrogenase family. Homodimer. Zn(2+) serves as cofactor.

It is found in the cytoplasm. It carries out the reaction sn-glycerol 1-phosphate + NAD(+) = dihydroxyacetone phosphate + NADH + H(+). The catalysed reaction is sn-glycerol 1-phosphate + NADP(+) = dihydroxyacetone phosphate + NADPH + H(+). It functions in the pathway membrane lipid metabolism; glycerophospholipid metabolism. Functionally, catalyzes the NAD(P)H-dependent reduction of dihydroxyacetonephosphate (DHAP or glycerone phosphate) to glycerol 1-phosphate (G1P). The G1P thus generated is used as the glycerophosphate backbone of phospholipids in the cellular membranes of Archaea. This is Glycerol-1-phosphate dehydrogenase [NAD(P)+] from Sulfolobus acidocaldarius (strain ATCC 33909 / DSM 639 / JCM 8929 / NBRC 15157 / NCIMB 11770).